The following is a 142-amino-acid chain: Large ribosomal subunit protein uL11 (142 aa).

This sequence belongs to the universal ribosomal protein uL11 family. In terms of assembly, part of the ribosomal stalk of the 50S ribosomal subunit. Interacts with L10 and the large rRNA to form the base of the stalk. L10 forms an elongated spine to which L12 dimers bind in a sequential fashion forming a multimeric L10(L12)X complex. One or more lysine residues are methylated.

Its function is as follows. Forms part of the ribosomal stalk which helps the ribosome interact with GTP-bound translation factors. The protein is Large ribosomal subunit protein uL11 of Shewanella pealeana (strain ATCC 700345 / ANG-SQ1).